A 1077-amino-acid chain; its full sequence is Mitogen-activated protein kinase kinase kinase 9 (1077 aa).

The tract at residues 1-40 (MESSRSLLGCLASATAAPPGDDATGAGAEEEEDEEEAAAE) is disordered. Residues 14–27 (ATAAPPGDDATGAG) show a composition bias toward low complexity. Acidic residues predominate over residues 28–38 (AEEEEDEEEAA). One can recognise an SH3 domain in the interval 45–109 (AALPYWTAVF…PSNYVTPRSA (65 aa)). In terms of domain architecture, Protein kinase spans 137 to 405 (LTLEEIIGIG…LTTIEESGFF (269 aa)). Residues 143 to 151 (IGIGGFGKV) and Lys-164 contribute to the ATP site. Asp-261 acts as the Proton acceptor in catalysis. 2 positions are modified to phosphothreonine; by autocatalysis: Thr-297 and Thr-298. Phosphoserine; by autocatalysis is present on Ser-301. Thr-305 carries the phosphothreonine; by autocatalysis modification. Leucine-zipper regions lie at residues 423–444 (IQEM…EEEL) and 458–479 (LRRR…ELNI). Positions 491–503 (VKKRKGKFRKSRL) are enriched in basic residues. Disordered regions lie at residues 491–511 (VKKR…GNRI), 526–606 (SPTM…TSGD), 646–713 (EDED…KRGG), 748–790 (LPPE…KKEE), 860–971 (RDPN…PRPS), and 986–1011 (SHAR…CFAS). Ser-526 is subject to Phosphoserine. Polar residues-rich tracts occupy residues 559 to 568 (PGESSKTWGR) and 693 to 709 (PVNS…TNSL). Over residues 755 to 767 (PPAREEKKRREGL) the composition is skewed to basic and acidic residues. Residues 863–880 (NQSLTPTHVTLTAPTQPS) are compositionally biased toward polar residues. Over residues 901–915 (GSRSPSSNGMSPSPG) the composition is skewed to low complexity. Positions 987 to 1011 (HARSASPANSSSTETPSNLDSCFAS) are enriched in polar residues.

Belongs to the protein kinase superfamily. STE Ser/Thr protein kinase family. MAP kinase kinase kinase subfamily. In terms of assembly, homodimer. Mg(2+) is required as a cofactor. Autophosphorylation on serine and threonine residues within the activation loop plays a role in enzyme activation. Thr-305 is likely to be the main autophosphorylation site. Autophosphorylation also occurs on Thr-297 and Ser-301. Expressed in cochlea and utricle.

It catalyses the reaction L-seryl-[protein] + ATP = O-phospho-L-seryl-[protein] + ADP + H(+). The catalysed reaction is L-threonyl-[protein] + ATP = O-phospho-L-threonyl-[protein] + ADP + H(+). Its activity is regulated as follows. Homodimerization via the leucine zipper domains is required for autophosphorylation of multiple sites in the activation loop and subsequent activation. Autophosphorylation at Thr-305 is the key step in activation of MAP3K9/MLK1 and is required for full phosphorylation. Autophosphorylation at Thr-297 and Ser-301 have been shown to be of secondary importance in the activation of MAP3K9/MLK1. Functionally, serine/threonine kinase which acts as an essential component of the MAP kinase signal transduction pathway. Plays an important role in the cascades of cellular responses evoked by changes in the environment. Once activated, acts as an upstream activator of the MKK/JNK signal transduction cascade through the phosphorylation of MAP2K4/MKK4 and MAP2K7/MKK7 which in turn activate the JNKs. The MKK/JNK signaling pathway regulates stress response via activator protein-1 (JUN) and GATA4 transcription factors. Also plays a role in mitochondrial death signaling pathway, including the release cytochrome c, leading to apoptosis. This chain is Mitogen-activated protein kinase kinase kinase 9 (Map3k9), found in Mus musculus (Mouse).